Here is a 740-residue protein sequence, read N- to C-terminus: Elongation factor 2 (740 aa).

The tr-type G domain maps to 18–263 (EQVRNIGIIA…MVVRWVPNPR (246 aa)). Residues 27–34 (AHVDHGKT), 93–97 (DTPGH), and 147–150 (NKVD) each bind GTP. Histidine 606 carries the post-translational modification Diphthamide.

Belongs to the TRAFAC class translation factor GTPase superfamily. Classic translation factor GTPase family. EF-G/EF-2 subfamily.

It localises to the cytoplasm. Catalyzes the GTP-dependent ribosomal translocation step during translation elongation. During this step, the ribosome changes from the pre-translocational (PRE) to the post-translocational (POST) state as the newly formed A-site-bound peptidyl-tRNA and P-site-bound deacylated tRNA move to the P and E sites, respectively. Catalyzes the coordinated movement of the two tRNA molecules, the mRNA and conformational changes in the ribosome. The sequence is that of Elongation factor 2 from Ignicoccus hospitalis (strain KIN4/I / DSM 18386 / JCM 14125).